The following is a 429-amino-acid chain: UDP-N-acetylglucosamine 1-carboxyvinyltransferase (429 aa).

Residue 22-23 participates in phosphoenolpyruvate binding; the sequence is KN. Arg93 provides a ligand contact to UDP-N-acetyl-alpha-D-glucosamine. Cys117 (proton donor) is an active-site residue. Residue Cys117 is modified to 2-(S-cysteinyl)pyruvic acid O-phosphothioketal. Residues 122–126, Asp307, and Val329 contribute to the UDP-N-acetyl-alpha-D-glucosamine site; that span reads RPVDL.

This sequence belongs to the EPSP synthase family. MurA subfamily.

The protein localises to the cytoplasm. The enzyme catalyses phosphoenolpyruvate + UDP-N-acetyl-alpha-D-glucosamine = UDP-N-acetyl-3-O-(1-carboxyvinyl)-alpha-D-glucosamine + phosphate. It functions in the pathway cell wall biogenesis; peptidoglycan biosynthesis. Cell wall formation. Adds enolpyruvyl to UDP-N-acetylglucosamine. In Chloroherpeton thalassium (strain ATCC 35110 / GB-78), this protein is UDP-N-acetylglucosamine 1-carboxyvinyltransferase.